The primary structure comprises 460 residues: Argininosuccinate lyase (460 aa).

This sequence belongs to the lyase 1 family. Argininosuccinate lyase subfamily.

It is found in the cytoplasm. The catalysed reaction is 2-(N(omega)-L-arginino)succinate = fumarate + L-arginine. It functions in the pathway amino-acid biosynthesis; L-arginine biosynthesis; L-arginine from L-ornithine and carbamoyl phosphate: step 3/3. This Streptococcus sanguinis (strain SK36) protein is Argininosuccinate lyase.